A 692-amino-acid polypeptide reads, in one-letter code: Single-strand DNA endonuclease ASTE1 (692 aa).

The protein belongs to the asteroid family.

In terms of biological role, structure-specific DNA endonuclease that specifically cleaves single-stranded DNA and 3' overhang DNA. The polypeptide is Single-strand DNA endonuclease ASTE1 (aste1a) (Danio rerio (Zebrafish)).